We begin with the raw amino-acid sequence, 98 residues long: Integration host factor subunit beta (98 aa).

This sequence belongs to the bacterial histone-like protein family. Heterodimer of an alpha and a beta chain.

In terms of biological role, this protein is one of the two subunits of integration host factor, a specific DNA-binding protein that functions in genetic recombination as well as in transcriptional and translational control. The sequence is that of Integration host factor subunit beta from Pseudomonas fluorescens (strain Pf0-1).